The chain runs to 196 residues: Dephospho-CoA kinase (196 aa).

The DPCK domain maps to 5-196 (IIGLTGGIAT…QVDIALNFEL (192 aa)). Residue 13–18 (ATGKTT) coordinates ATP.

The protein belongs to the CoaE family.

The protein resides in the cytoplasm. The enzyme catalyses 3'-dephospho-CoA + ATP = ADP + CoA + H(+). It participates in cofactor biosynthesis; coenzyme A biosynthesis; CoA from (R)-pantothenate: step 5/5. Its function is as follows. Catalyzes the phosphorylation of the 3'-hydroxyl group of dephosphocoenzyme A to form coenzyme A. The polypeptide is Dephospho-CoA kinase (Nostoc sp. (strain PCC 7120 / SAG 25.82 / UTEX 2576)).